The sequence spans 309 residues: Tagatose-6-phosphate kinase (309 aa).

It belongs to the carbohydrate kinase PfkB family. LacC subfamily.

The enzyme catalyses D-tagatofuranose 6-phosphate + ATP = D-tagatofuranose 1,6-bisphosphate + ADP + H(+). It participates in carbohydrate metabolism; D-tagatose 6-phosphate degradation; D-glyceraldehyde 3-phosphate and glycerone phosphate from D-tagatose 6-phosphate: step 1/2. This chain is Tagatose-6-phosphate kinase, found in Streptococcus pyogenes serotype M1.